The sequence spans 416 residues: UPF0761 membrane protein Rfer_2991 (416 aa).

Helical transmembrane passes span 60–80, 117–137, 156–176, 187–207, 222–242, and 268–288; these read MALV…PMFA, LGGA…LTID, VLVY…SLSI, VVGV…FFMV, WVKW…LELA, and ILLI…VIAA.

Belongs to the UPF0761 family.

The protein localises to the cell inner membrane. The chain is UPF0761 membrane protein Rfer_2991 from Albidiferax ferrireducens (strain ATCC BAA-621 / DSM 15236 / T118) (Rhodoferax ferrireducens).